The chain runs to 429 residues: Histidinol dehydrogenase (429 aa).

3 residues coordinate NAD(+): Tyr-127, Gln-188, and Asn-211. Positions 234, 256, and 259 each coordinate substrate. 2 residues coordinate Zn(2+): Gln-256 and His-259. Active-site proton acceptor residues include Glu-324 and His-325. Positions 325, 358, 412, and 417 each coordinate substrate. Asp-358 lines the Zn(2+) pocket. Position 417 (His-417) interacts with Zn(2+).

The protein belongs to the histidinol dehydrogenase family. Zn(2+) is required as a cofactor.

The catalysed reaction is L-histidinol + 2 NAD(+) + H2O = L-histidine + 2 NADH + 3 H(+). It participates in amino-acid biosynthesis; L-histidine biosynthesis; L-histidine from 5-phospho-alpha-D-ribose 1-diphosphate: step 9/9. Its function is as follows. Catalyzes the sequential NAD-dependent oxidations of L-histidinol to L-histidinaldehyde and then to L-histidine. This is Histidinol dehydrogenase from Bacillus cereus (strain ATCC 10987 / NRS 248).